We begin with the raw amino-acid sequence, 186 residues long: Elongation factor P (186 aa).

Belongs to the elongation factor P family.

It localises to the cytoplasm. The protein operates within protein biosynthesis; polypeptide chain elongation. In terms of biological role, involved in peptide bond synthesis. Stimulates efficient translation and peptide-bond synthesis on native or reconstituted 70S ribosomes in vitro. Probably functions indirectly by altering the affinity of the ribosome for aminoacyl-tRNA, thus increasing their reactivity as acceptors for peptidyl transferase. The protein is Elongation factor P of Shewanella sp. (strain ANA-3).